We begin with the raw amino-acid sequence, 504 residues long: Ribonuclease Y (504 aa).

The KH domain occupies 194–279 (TVHVVSLPND…EMVEKAKQEV (86 aa)). The HD domain maps to 320 to 413 (VLKHSMEVAY…VQAADAISAA (94 aa)).

This sequence belongs to the RNase Y family.

Endoribonuclease that initiates mRNA decay. The chain is Ribonuclease Y from Clostridium novyi (strain NT).